We begin with the raw amino-acid sequence, 207 residues long: Outer-membrane lipoprotein LolB (207 aa).

An N-terminal signal peptide occupies residues 1 to 23 (MINLRRFTKFTLAGLTALSLLGG). The N-palmitoyl cysteine moiety is linked to residue C24. The S-diacylglycerol cysteine moiety is linked to residue C24.

It belongs to the LolB family. In terms of assembly, monomer.

It is found in the cell outer membrane. In terms of biological role, plays a critical role in the incorporation of lipoproteins in the outer membrane after they are released by the LolA protein. The protein is Outer-membrane lipoprotein LolB of Shewanella amazonensis (strain ATCC BAA-1098 / SB2B).